We begin with the raw amino-acid sequence, 183 residues long: Adenine phosphoribosyltransferase (183 aa).

The protein belongs to the purine/pyrimidine phosphoribosyltransferase family. As to quaternary structure, homodimer.

Its subcellular location is the cytoplasm. The enzyme catalyses AMP + diphosphate = 5-phospho-alpha-D-ribose 1-diphosphate + adenine. It functions in the pathway purine metabolism; AMP biosynthesis via salvage pathway; AMP from adenine: step 1/1. In terms of biological role, catalyzes a salvage reaction resulting in the formation of AMP, that is energically less costly than de novo synthesis. This chain is Adenine phosphoribosyltransferase, found in Shewanella pealeana (strain ATCC 700345 / ANG-SQ1).